Consider the following 357-residue polypeptide: 3-isopropylmalate dehydrogenase (357 aa).

Arg-97, Arg-107, Arg-135, and Asp-224 together coordinate substrate. Mg(2+) is bound by residues Asp-224, Asp-248, and Asp-252. 282–294 is a binding site for NAD(+); that stretch reads GSAPDIAGQDLAN.

It belongs to the isocitrate and isopropylmalate dehydrogenases family. LeuB type 1 subfamily. In terms of assembly, homodimer. It depends on Mg(2+) as a cofactor. The cofactor is Mn(2+).

It is found in the cytoplasm. The catalysed reaction is (2R,3S)-3-isopropylmalate + NAD(+) = 4-methyl-2-oxopentanoate + CO2 + NADH. Its pathway is amino-acid biosynthesis; L-leucine biosynthesis; L-leucine from 3-methyl-2-oxobutanoate: step 3/4. In terms of biological role, catalyzes the oxidation of 3-carboxy-2-hydroxy-4-methylpentanoate (3-isopropylmalate) to 3-carboxy-4-methyl-2-oxopentanoate. The product decarboxylates to 4-methyl-2 oxopentanoate. The sequence is that of 3-isopropylmalate dehydrogenase from Prochlorococcus marinus (strain MIT 9313).